Here is a 484-residue protein sequence, read N- to C-terminus: Arginine ADP-riboxanase OspC2 (484 aa).

Positions 143, 144, 145, 149, 162, 172, 188, 206, 211, 231, and 326 each coordinate NAD(+). E326 is a catalytic residue. 2 ANK repeats span residues 414–444 (LYDV…DVNK) and 451–480 (SGDT…VSGK).

This sequence belongs to the OspC family.

Its subcellular location is the secreted. The enzyme catalyses L-arginyl-[protein] + NAD(+) = ADP-riboxanated L-argininyl-[protein] + nicotinamide + NH4(+) + H(+). In terms of biological role, ADP-riboxanase effector that mediates arginine ADP-riboxanation of host caspases. ADP-riboxanation of host apoptotic caspases (CASP3 and CASP9) prevents their activation, thereby inhibiting host cell extrinsic and intrinsic apoptosis. Does not catalyze ADP-riboxanation of host CASP4/CASP11 or CASP8. In contrast to Ospc1 and OspC3, not able to inactivate host calmodulin. The sequence is that of Arginine ADP-riboxanase OspC2 from Shigella flexneri.